The primary structure comprises 510 residues: Probable gamma-aminobutyrate transaminase 3, mitochondrial (510 aa).

The N-terminal 41 residues, 1–41 (MICRSLLLLRSNAASKASSIVKHVAATGCLPEYSSEAPARY), are a transit peptide targeting the mitochondrion. 166–167 (GS) serves as a coordination point for pyridoxal 5'-phosphate. Residue Y199 coordinates substrate. Residue D306 coordinates pyridoxal 5'-phosphate. Position 335 (K335) interacts with substrate. K335 carries the post-translational modification N6-(pyridoxal phosphate)lysine.

It belongs to the class-III pyridoxal-phosphate-dependent aminotransferase family.

It localises to the mitochondrion. The catalysed reaction is 4-aminobutanoate + pyruvate = succinate semialdehyde + L-alanine. The enzyme catalyses 4-aminobutanoate + glyoxylate = succinate semialdehyde + glycine. Its function is as follows. Transaminase that degrades gamma-amino butyric acid (GABA). This chain is Probable gamma-aminobutyrate transaminase 3, mitochondrial, found in Oryza sativa subsp. indica (Rice).